A 543-amino-acid chain; its full sequence is Putative fatty acyl-CoA reductase CG8303 (543 aa).

Residues 1–29 are disordered; that stretch reads MAVITEHGGTTSSPPENNNSIGNGKHRVN. Polar residues predominate over residues 8-22; sequence GGTTSSPPENNNSIG. The next 3 helical transmembrane spans lie at 386 to 406, 500 to 520, and 522 to 542; these read LFFY…EKLF, VFNV…YFAL, and LTLG…FLVW.

It belongs to the fatty acyl-CoA reductase family.

The protein localises to the membrane. It catalyses the reaction a long-chain fatty acyl-CoA + 2 NADPH + 2 H(+) = a long-chain primary fatty alcohol + 2 NADP(+) + CoA. It carries out the reaction hexadecanoyl-CoA + 2 NADPH + 2 H(+) = hexadecan-1-ol + 2 NADP(+) + CoA. The catalysed reaction is octadecanoyl-CoA + 2 NADPH + 2 H(+) = octadecan-1-ol + 2 NADP(+) + CoA. In terms of biological role, catalyzes the reduction of C16 or C18 fatty acyl-CoA to fatty alcohols. This chain is Putative fatty acyl-CoA reductase CG8303, found in Drosophila melanogaster (Fruit fly).